The following is a 138-amino-acid chain: Acidic phospholipase A2 Ts-A3 (138 aa).

The signal sequence occupies residues 1-16 (MRTLWIMAVLLLGVEG). Cystine bridges form between Cys42–Cys132, Cys44–Cys60, Cys59–Cys111, Cys65–Cys138, Cys66–Cys104, Cys73–Cys97, and Cys91–Cys102. Ca(2+)-binding residues include Tyr43, Gly45, and Gly47. The active site involves His63. Asp64 lines the Ca(2+) pocket. Residue Asp105 is part of the active site.

It depends on Ca(2+) as a cofactor. As to expression, expressed by the venom gland.

The protein resides in the secreted. The catalysed reaction is a 1,2-diacyl-sn-glycero-3-phosphocholine + H2O = a 1-acyl-sn-glycero-3-phosphocholine + a fatty acid + H(+). Snake venom phospholipase A2 (PLA2) that shows a moderate inhibition of ADP-induced human platelet aggregation when tested on platelet rich plasma. Exhibits high hydrolytic activities and prefers the anionic micelles (dPPC with deoxycholate) to the zwitterionic micelles (dPPC with Triton X-100). PLA2 catalyzes the calcium-dependent hydrolysis of the 2-acyl groups in 3-sn-phosphoglycerides. The chain is Acidic phospholipase A2 Ts-A3 from Trimeresurus stejnegeri (Chinese green tree viper).